The following is a 434-amino-acid chain: Serine hydroxymethyltransferase (434 aa).

(6S)-5,6,7,8-tetrahydrofolate contacts are provided by residues Leu132 and 136 to 138; that span reads GHL. An N6-(pyridoxal phosphate)lysine modification is found at Lys241.

It belongs to the SHMT family. Homodimer. The cofactor is pyridoxal 5'-phosphate.

The protein resides in the cytoplasm. It catalyses the reaction (6R)-5,10-methylene-5,6,7,8-tetrahydrofolate + glycine + H2O = (6S)-5,6,7,8-tetrahydrofolate + L-serine. It functions in the pathway one-carbon metabolism; tetrahydrofolate interconversion. The protein operates within amino-acid biosynthesis; glycine biosynthesis; glycine from L-serine: step 1/1. Its function is as follows. Catalyzes the reversible interconversion of serine and glycine with tetrahydrofolate (THF) serving as the one-carbon carrier. This reaction serves as the major source of one-carbon groups required for the biosynthesis of purines, thymidylate, methionine, and other important biomolecules. Also exhibits THF-independent aldolase activity toward beta-hydroxyamino acids, producing glycine and aldehydes, via a retro-aldol mechanism. This Nitrobacter hamburgensis (strain DSM 10229 / NCIMB 13809 / X14) protein is Serine hydroxymethyltransferase.